The following is a 196-amino-acid chain: Histone H1.0-B (196 aa).

Disordered stretches follow at residues 1-29 (MAENSAATPAAKPKRSKALKKSTDHPKYS) and 86-196 (GVGA…GRKK). Positions 24–97 (DHPKYSDMIL…GASGSFRLAK (74 aa)) constitute an H15 domain. Residues 104 to 196 (PAKKPKKEIK…ASPKKSGRKK (93 aa)) are compositionally biased toward basic residues.

The protein belongs to the histone H1/H5 family.

The protein resides in the nucleus. Its subcellular location is the chromosome. Histones H1 are necessary for the condensation of nucleosome chains into higher-order structures. The histones H1.0 are found in cells that are in terminal stages of differentiation or that have low rates of cell division. The sequence is that of Histone H1.0-B (h1-0-b) from Xenopus laevis (African clawed frog).